A 105-amino-acid polypeptide reads, in one-letter code: Probable molt-inhibiting hormone (105 aa).

A signal peptide spans 1 to 28; sequence MYRMPMRFWLTAVVMVVVGALLLDTASA. Disulfide bonds link cysteine 35/cysteine 72, cysteine 52/cysteine 68, and cysteine 55/cysteine 81.

Belongs to the arthropod CHH/MIH/GIH/VIH hormone family. Expressed in the postmolt, intermolt, and premolt stages of the shrimp eyestalks and the brain.

It is found in the secreted. Functionally, inhibits Y-organs where molting hormone (ecdysteroid) is secreted. A molting cycle is initiated when MIH secretion diminishes or stops. The chain is Probable molt-inhibiting hormone from Metapenaeus ensis (Greasyback shrimp).